Here is a 346-residue protein sequence, read N- to C-terminus: Cell division protein ZipA (346 aa).

Residues 1–6 (MEDLQL) lie on the Periplasmic side of the membrane. The helical transmembrane segment at 7-27 (VLFVLGAIAIVAVLVHGFWSI) threads the bilayer. The Cytoplasmic portion of the chain corresponds to 28 to 346 (RRQQPKSLKD…DYLHRIRANA (319 aa)). The disordered stretch occupies residues 116–146 (EPSMAQPDFSLQSPTAKEQHRGPKASRQEPV).

It belongs to the ZipA family. As to quaternary structure, interacts with FtsZ via their C-terminal domains.

It is found in the cell inner membrane. Functionally, essential cell division protein that stabilizes the FtsZ protofilaments by cross-linking them and that serves as a cytoplasmic membrane anchor for the Z ring. Also required for the recruitment to the septal ring of downstream cell division proteins. The sequence is that of Cell division protein ZipA from Shewanella sp. (strain ANA-3).